Reading from the N-terminus, the 118-residue chain is Small ribosomal subunit protein uS13 (118 aa).

The segment at 94-118 is disordered; sequence SLPLRGQRTKTNARTRKGPRKPIRK.

Belongs to the universal ribosomal protein uS13 family. In terms of assembly, part of the 30S ribosomal subunit. Forms a loose heterodimer with protein S19. Forms two bridges to the 50S subunit in the 70S ribosome.

In terms of biological role, located at the top of the head of the 30S subunit, it contacts several helices of the 16S rRNA. In the 70S ribosome it contacts the 23S rRNA (bridge B1a) and protein L5 of the 50S subunit (bridge B1b), connecting the 2 subunits; these bridges are implicated in subunit movement. Contacts the tRNAs in the A and P-sites. This Shewanella halifaxensis (strain HAW-EB4) protein is Small ribosomal subunit protein uS13.